Consider the following 132-residue polypeptide: Small ribosomal subunit protein uS8 (132 aa).

It belongs to the universal ribosomal protein uS8 family. In terms of assembly, part of the 30S ribosomal subunit. Contacts proteins S5 and S12.

Functionally, one of the primary rRNA binding proteins, it binds directly to 16S rRNA central domain where it helps coordinate assembly of the platform of the 30S subunit. In Oceanobacillus iheyensis (strain DSM 14371 / CIP 107618 / JCM 11309 / KCTC 3954 / HTE831), this protein is Small ribosomal subunit protein uS8.